The sequence spans 212 residues: Thymidylate kinase (212 aa).

10–17 lines the ATP pocket; that stretch reads GLEGAGKT.

It belongs to the thymidylate kinase family.

The enzyme catalyses dTMP + ATP = dTDP + ADP. In terms of biological role, phosphorylation of dTMP to form dTDP in both de novo and salvage pathways of dTTP synthesis. The sequence is that of Thymidylate kinase from Yersinia pseudotuberculosis serotype O:3 (strain YPIII).